Reading from the N-terminus, the 139-residue chain is uncharacterized protein (139 aa).

This is an uncharacterized protein from Dryophytes versicolor (chameleon treefrog).